Consider the following 195-residue polypeptide: MARCKS-related protein (195 aa).

A disordered region spans residues 1–195 (MGSQSSKAPR…PTPASAEQNE (195 aa)). The N-myristoyl glycine moiety is linked to residue G2. Phosphothreonine is present on T14. The segment covering 16 to 26 (EEAAGASPAKA) has biased composition (low complexity). S22, S36, S41, and S48 each carry phosphoserine. A compositionally biased stretch (low complexity) spans 53 to 64 (GTDEAAGATGDA). S71 carries the phosphoserine modification. A compositionally biased stretch (basic and acidic residues) spans 76–85 (AKGEVPPKET). Residue T85 is modified to Phosphothreonine. The span at 86 to 98 (PKKKKKFSFKKPF) shows a compositional bias: basic residues. The tract at residues 87–110 (KKKKKFSFKKPFKLSGLSFKRNRK) is effector domain involved in lipid-binding and calmodulin-binding. Phosphoserine occurs at positions 93, 101, 104, 119, 120, and 135. T148 carries the phosphothreonine modification. 3 positions are modified to phosphoserine: S151, S162, and S165. A compositionally biased stretch (low complexity) spans 153–195 (EPQAKGAEASAASEEEAGPQATEPSTPSGPESGPTPASAEQNE). Residues T178 and T187 each carry the phosphothreonine modification.

This sequence belongs to the MARCKS family. In terms of assembly, binds to filamentous actin (F-actin), but not to monomeric G-actin, independently of its phosphorylation status. Post-translationally, phosphorylated. Phosphorylation at Ser-120 and Thr-178 is non-redundantly catalyzed by MAPK8 in vivo. Phosphorylation at Thr-148 is preferentially catalyzed by MAPK8 in vivo, but this modification can also be catalyzed by other kinases in the absence of MAPK8. May be phosphorylated by protein kinase C, which disrupts the interaction with calmodulin.

It localises to the cytoplasm. Its subcellular location is the cytoskeleton. The protein resides in the cell membrane. In terms of biological role, controls cell movement by regulating actin cytoskeleton homeostasis and filopodium and lamellipodium formation. When unphosphorylated, induces cell migration. When phosphorylated by MAPK8, induces actin bundles formation and stabilization, thereby reducing actin plasticity, hence restricting cell movement, including neuronal migration. May be involved in coupling the protein kinase C and calmodulin signal transduction systems. The chain is MARCKS-related protein (MARCKSL1) from Homo sapiens (Human).